Here is a 232-residue protein sequence, read N- to C-terminus: Uracil-DNA glycosylase (232 aa).

The Proton acceptor role is filled by aspartate 66.

This sequence belongs to the uracil-DNA glycosylase (UDG) superfamily. UNG family.

The protein resides in the cytoplasm. The catalysed reaction is Hydrolyzes single-stranded DNA or mismatched double-stranded DNA and polynucleotides, releasing free uracil.. Functionally, excises uracil residues from the DNA which can arise as a result of misincorporation of dUMP residues by DNA polymerase or due to deamination of cytosine. In Lactobacillus acidophilus (strain ATCC 700396 / NCK56 / N2 / NCFM), this protein is Uracil-DNA glycosylase.